The sequence spans 1969 residues: TP53-binding protein 1 (1969 aa).

Positions 1–24 are disordered; sequence MPGEQMDPTGSQLDSDFSQQDTPC. The segment covering 8–22 has biased composition (polar residues); sequence PTGSQLDSDFSQQDT. Phosphoserine occurs at positions 30, 68, and 73. A disordered region spans residues 67 to 168; it reads VSNPEQSAVE…DSLAAEDSAS (102 aa). Residues 69–85 show a composition bias toward polar residues; sequence NPEQSAVEQGDSNSSFN. Basic and acidic residues predominate over residues 86-95; that stretch reads EHLKEKKASD. The span at 101–110 shows a compositional bias: polar residues; it reads HLGTSGSISQ. A Phosphoserine modification is found at Ser109. Acidic residues predominate over residues 135 to 148; it reads PEEEKEEEELEEEK. The segment covering 158 to 168 has biased composition (low complexity); it reads ADSLAAEDSAS. Residues Ser169, Ser179, and Ser181 each carry the phosphoserine modification. Lys220 participates in a covalent cross-link: Glycyl lysine isopeptide (Lys-Gly) (interchain with G-Cter in SUMO1); alternate. Lys220 participates in a covalent cross-link: Glycyl lysine isopeptide (Lys-Gly) (interchain with G-Cter in SUMO2); alternate. 3 disordered regions span residues 254-337, 352-599, and 614-707; these read EQNL…VSTP, LVQE…CKGR, and DSGS…CPEA. 2 positions are modified to phosphoserine: Ser267 and Ser268. Residues 277–288 show a composition bias toward basic and acidic residues; sequence ETKEQVPARELL. Polar residues predominate over residues 294 to 324; the sequence is VQPSSEPEVSSTQEDLFDQSSKTASDGCSTP. Position 297 is a phosphoserine (Ser297). Phosphothreonine is present on Thr305. Residues Ser368, Ser382, and Ser397 each carry the phosphoserine modification. Residues 407-419 are compositionally biased toward basic and acidic residues; it reads QKLHDDEAMETEK. Residues 426–442 show a composition bias toward polar residues; that stretch reads PAVSPQASTPVSRSTPV. A phosphoserine mark is found at Ser429, Ser452, and Ser464. The segment covering 481 to 490 has biased composition (polar residues); sequence HSSSLTVECS. The segment covering 491–501 has biased composition (basic and acidic residues); the sequence is KTSESEPKNFT. Phosphoserine is present on residues Ser507, Ser518, Ser523, and Ser525. The segment covering 517–528 has biased composition (polar residues); the sequence is LSTSEYSQSSKM. Residues Thr543 and Thr548 each carry the phosphothreonine modification. Residues Ser552 and Ser579 each carry the phosphoserine modification. Polar residues predominate over residues 566 to 582; the sequence is VLVTPSQDDQVEMSQNV. Residues 583 to 599 are compositionally biased toward basic and acidic residues; sequence DKAKEDETEDRGDCKGR. The segment covering 614-634 has biased composition (polar residues); that stretch reads DSGSQAVPSPATRSEALSSVL. Phosphoserine occurs at positions 622, 627, 631, and 632. The segment covering 640–649 has biased composition (basic and acidic residues); it reads MDTKEHHPEE. Thr662 is subject to Phosphothreonine. The segment covering 666–675 has biased composition (basic and acidic residues); it reads SHREEPKEEP. Ser684, Ser716, Ser719, and Ser763 each carry phosphoserine. Positions 754-870 are disordered; sequence KEPSPRADVS…DDKQLGPEGA (117 aa). A compositionally biased stretch (basic and acidic residues) spans 790-818; that stretch reads AENRLDTPEEKRIECDGDSKAETTEKDAV. Ser822 is modified (phosphoserine). A compositionally biased stretch (basic and acidic residues) spans 830-839; sequence VRDEPVRPDQ. Residue Thr912 is modified to Phosphothreonine. A Glycyl lysine isopeptide (Lys-Gly) (interchain with G-Cter in SUMO2) cross-link involves residue Lys920. Residues 927–1017 form a disordered region; the sequence is STPIGISNYP…GSTAIAEPVA (91 aa). The segment covering 935-949 has biased composition (polar residues); sequence YPESTIATSDVTSES. Residues 961–975 show a composition bias toward basic and acidic residues; the sequence is EKGDSESAPEMDGKL. Residue Ser965 is modified to Phosphoserine. Lys974 is covalently cross-linked (Glycyl lysine isopeptide (Lys-Gly) (interchain with G-Cter in SUMO2)). Ser1018 carries the phosphoserine modification. 3 disordered regions span residues 1034-1144, 1178-1231, and 1267-1478; these read QEKE…MDRP, GTST…PHGH, and TEET…DSSS. Basic and acidic residues predominate over residues 1060-1074; it reads EEDKERPDVTPKLRQ. Phosphoserine occurs at positions 1075 and 1096. Residues 1099–1112 are compositionally biased toward low complexity; sequence SQQRASQEQRASQE. Ser1115 is modified (phosphoserine). Positions 1178–1197 are enriched in polar residues; the sequence is GTSTAEQNSGKQDATVQTER. At Thr1211 the chain carries Phosphothreonine. 2 positions are modified to phosphoserine: Ser1213 and Ser1216. Residues 1269–1282 are compositionally biased toward acidic residues; that stretch reads ETEEPIVECQECET. Over residues 1295–1326 the composition is skewed to low complexity; that stretch reads DLGDISSFSSKASSSHHTSSGTSLSAIHSSGS. Residue Ser1314 is modified to Phosphoserine. At Arg1329 the chain carries Omega-N-methylarginine. Residue Ser1339 is modified to Phosphoserine. An Omega-N-methylarginine modification is found at Arg1352. Ser1359 carries the phosphoserine modification. Residue Lys1362 forms a Glycyl lysine isopeptide (Lys-Gly) (interchain with G-Cter in SUMO2) linkage. Ser1365 bears the Phosphoserine mark. The short motif at 1393–1400 is the GAR element; sequence RGRGRRGR. 2 positions are modified to phosphoserine: Ser1423 and Ser1427. Residue Lys1431 forms a Glycyl lysine isopeptide (Lys-Gly) (interchain with G-Cter in SUMO1); alternate linkage. A Glycyl lysine isopeptide (Lys-Gly) (interchain with G-Cter in SUMO2); alternate cross-link involves residue Lys1431. Phosphoserine is present on residues Ser1457, Ser1459, Ser1470, and Ser1471. A compositionally biased stretch (low complexity) spans 1469–1478; it reads GSSDGLDSSS. A tudor-like region spans residues 1481–1600; the sequence is NSFVGLRVVA…NRLREQYGLG (120 aa). Residues 1492 to 1520 form an interaction with dimethylated histone H4 region; sequence WSSNGYFYSGKITRDVGAGKYKLLFDDGY. Lys1560 participates in a covalent cross-link: Glycyl lysine isopeptide (Lys-Gly) (interchain with G-Cter in SUMO1); alternate. Lys1560 participates in a covalent cross-link: Glycyl lysine isopeptide (Lys-Gly) (interchain with G-Cter in SUMO2); alternate. Positions 1601–1628 match the UDR motif; sequence PYEAVTPLTKAADISLDNLVEGKRKRRS. Position 1606 is a phosphothreonine (Thr1606). Ser1615, Ser1628, and Ser1632 each carry phosphoserine. The segment at 1624-1715 is disordered; that stretch reads RKRRSNISSP…IGEPSVLEEP (92 aa). Residues 1631–1648 are compositionally biased toward low complexity; the sequence is SSPVTPTAASSSSTTPTR. Thr1635 and Thr1645 each carry phosphothreonine. A phosphoserine mark is found at Ser1653, Ser1670, and Ser1675. Lys1682 is covalently cross-linked (Glycyl lysine isopeptide (Lys-Gly) (interchain with G-Cter in ubiquitin)). Phosphoserine occurs at positions 1698 and 1756. BRCT domains are found at residues 1749 to 1845 and 1861 to 1961; these read LDGP…NYLL and PREN…QHPK.

As to quaternary structure, homoligomer. Interacts with p53/TP53 (via the central domain). Interacts with DCLRE1C. Interacts with histone H2AX and this requires phosphorylation of H2AX on 'Ser-139'. Interacts with histone H4 that has been dimethylated at 'Lys-20' (H4K20me2). Has low affinity for histone H4 containing monomethylated 'Lys-20' (H4K20me1). Does not bind histone H4 containing unmethylated or trimethylated 'Lys-20' (H4K20me3). Has low affinity for histone H3 that has been dimethylated on 'Lys-79'. Has very low affinity for histone H3 that has been monomethylated on 'Lys-79' (in vitro). Does not bind unmethylated histone H3. Interacts with histone H2A monoubiquitinated at 'Lys-15' (H2AK15Ub). Interacts with PWWP3A/EXPAND1. Interacts with CHEK2; modulates CHEK2 phosphorylation at 'Thr-68' in response to infrared. Interacts with MSL1; this interaction may be required for MSL1 DNA repair activity, but not for histone acetyltransferase activity. Interacts (when phosphorylated by ATM) with RIF1. Interacts (via the Tudor-like domain) with NUDT16L1/TIRR; interaction masks the Tudor-like domain and prevents recruitment to chromatin. Interacts with PAXIP1. Interacts with IFI202A. Interacts with SHLD2. Interacts (when phosphorylated) with TOPBP1. Interacts with GFI1; promoting methylation by PRMT1. Interacts with (phosphorylated) DYNLL1; specifically binds DYNLL1 phosphorylated at 'Ser-88' and promotes its recruitment to double stand breaks (DSBs). Post-translationally, phosphorylated at basal level in the absence of DNA damage. Phosphorylated by ATM in response to DNA damage: phosphorylation at different sites promotes interaction with different set of proteins: phosphorylation at the N-terminus by ATM (residues from 11-181) promotes interaction with PAXIP1 and non-homologous end joining (NHEJ) of dysfunctional telomeres. Phosphorylation by ATM at residues that are located more C-terminus (residues 300-650) leads to promote interaction with RIF1. Interaction with RIF1 leads to disrupt interaction with NUDT16L1/TIRR. Phosphorylation at Thr-1606 and Ser-1615 in the UDR motif blocks interaction with H2AK15ub. Dephosphorylated by PPP4C. Hyperphosphorylation during mitosis correlates with its exclusion from chromatin and DNA lesions. Hyperphosphorylated in an ATR-dependent manner in response to DNA damage induced by UV irradiation. Dephosphorylated by PPP5C. Phosphorylation at Ser-368 and Thr-662 promotes interaction with TOPBP1. Phosphorylated by VRK1. In terms of processing, asymmetrically dimethylated on Arg residues by PRMT1. Methylation is required for DNA binding. Monoubiquitinated at Lys-1682 by MSL2 is reponse to DNA damage, leading to its stabilization.

Its subcellular location is the nucleus. It localises to the chromosome. The protein resides in the centromere. The protein localises to the kinetochore. Its function is as follows. Double-strand break (DSB) repair protein involved in response to DNA damage, telomere dynamics and class-switch recombination (CSR) during antibody genesis. Plays a key role in the repair of double-strand DNA breaks (DSBs) in response to DNA damage by promoting non-homologous end joining (NHEJ)-mediated repair of DSBs and specifically counteracting the function of the homologous recombination (HR) repair protein BRCA1. In response to DSBs, phosphorylation by ATM promotes interaction with RIF1 and dissociation from NUDT16L1/TIRR, leading to recruitment to DSBs sites. Recruited to DSBs sites by recognizing and binding histone H2A monoubiquitinated at 'Lys-15' (H2AK15Ub) and histone H4 dimethylated at 'Lys-20' (H4K20me2), two histone marks that are present at DSBs sites. Required for immunoglobulin class-switch recombination (CSR) during antibody genesis, a process that involves the generation of DNA DSBs. Participates in the repair and the orientation of the broken DNA ends during CSR. In contrast, it is not required for classic NHEJ and V(D)J recombination. Promotes NHEJ of dysfunctional telomeres. The chain is TP53-binding protein 1 from Mus musculus (Mouse).